Here is a 149-residue protein sequence, read N- to C-terminus: Small ribosomal subunit protein uS19 (149 aa).

This sequence belongs to the universal ribosomal protein uS19 family.

Functionally, protein S19 forms a complex with S13 that binds strongly to the 16S ribosomal RNA. The sequence is that of Small ribosomal subunit protein uS19 from Methanopyrus kandleri (strain AV19 / DSM 6324 / JCM 9639 / NBRC 100938).